We begin with the raw amino-acid sequence, 247 residues long: Uridylate kinase (247 aa).

15–18 (KLSG) serves as a coordination point for ATP. The interval 23–28 (GEEGFG) is involved in allosteric activation by GTP. UMP is bound at residue Gly-57. Residues Gly-58 and Arg-62 each contribute to the ATP site. UMP is bound by residues Asp-77 and 138-145 (TGNPFFTT). The ATP site is built by Thr-165, Tyr-171, and Asp-174.

Belongs to the UMP kinase family. In terms of assembly, homohexamer.

Its subcellular location is the cytoplasm. It catalyses the reaction UMP + ATP = UDP + ADP. It participates in pyrimidine metabolism; CTP biosynthesis via de novo pathway; UDP from UMP (UMPK route): step 1/1. Its activity is regulated as follows. Allosterically activated by GTP. Inhibited by UTP. Functionally, catalyzes the reversible phosphorylation of UMP to UDP. In Pseudoalteromonas atlantica (strain T6c / ATCC BAA-1087), this protein is Uridylate kinase.